A 25-amino-acid chain; its full sequence is Antimicrobial peptide 3 (25 aa).

In terms of tissue distribution, skin.

The protein localises to the secreted. In terms of biological role, has antibacterial activity against Gram-positive bacterium S.aureus and Gram-negative bacterium E.coli, when in combination with XT1 and XT6. The chain is Antimicrobial peptide 3 from Xenopus tropicalis (Western clawed frog).